The sequence spans 261 residues: UPF0246 protein Rmet_0978 (261 aa).

It belongs to the UPF0246 family.

The chain is UPF0246 protein Rmet_0978 from Cupriavidus metallidurans (strain ATCC 43123 / DSM 2839 / NBRC 102507 / CH34) (Ralstonia metallidurans).